Reading from the N-terminus, the 273-residue chain is Putative deoxyribonuclease TATDN1 homolog (273 aa).

A divalent metal cation is bound by residues Glu-91, His-125, His-147, and Asp-195.

It belongs to the metallo-dependent hydrolases superfamily. TatD-type hydrolase family. A divalent metal cation serves as cofactor.

Its subcellular location is the nucleus. In terms of biological role, putative deoxyribonuclease. This chain is Putative deoxyribonuclease TATDN1 homolog, found in Encephalitozoon cuniculi (strain GB-M1) (Microsporidian parasite).